Here is a 179-residue protein sequence, read N- to C-terminus: CASP-like protein 5A2 (179 aa).

Residues 1-24 (MNVSHASVHPVEDPPAAATEVENP) form a disordered region. At 1-38 (MNVSHASVHPVEDPPAAATEVENPPRVRMDDMEGMPGT) the chain is on the cytoplasmic side. Residues 39–59 (LLGLALRFFQFLFAAAALCVM) form a helical membrane-spanning segment. Residues 60–70 (ASTSDFPSVTA) lie on the Extracellular side of the membrane. The chain crosses the membrane as a helical span at residues 71-91 (FCYLVAATGLQSLWSLALAMV). The Cytoplasmic portion of the chain corresponds to 92-115 (DVYAIMVKRSLQNRRLVSLFAIGD). Residues 116–136 (GVTSTLTFAAACASAGITVLI) traverse the membrane as a helical segment. At 137–155 (DNDLNSCAQNHCVQFETST) the chain is on the extracellular side. The chain crosses the membrane as a helical span at residues 156-176 (ALAFISWFAALPSFLFNFWSL). Residues 177–179 (ASR) lie on the Cytoplasmic side of the membrane.

Belongs to the Casparian strip membrane proteins (CASP) family. Homodimer and heterodimers.

Its subcellular location is the cell membrane. The sequence is that of CASP-like protein 5A2 from Arabidopsis thaliana (Mouse-ear cress).